Reading from the N-terminus, the 829-residue chain is Leucine--tRNA ligase (829 aa).

Residues 42–52 carry the 'HIGH' region motif; the sequence is PYPSGNLHMGH. The 'KMSKS' region signature appears at 582–586; that stretch reads KMSKS. Residue Lys-585 coordinates ATP.

It belongs to the class-I aminoacyl-tRNA synthetase family.

The protein resides in the cytoplasm. The enzyme catalyses tRNA(Leu) + L-leucine + ATP = L-leucyl-tRNA(Leu) + AMP + diphosphate. This Moorella thermoacetica (strain ATCC 39073 / JCM 9320) protein is Leucine--tRNA ligase.